The primary structure comprises 431 residues: Enolase (431 aa).

Glutamine 166 provides a ligand contact to (2R)-2-phosphoglycerate. Glutamate 208 acts as the Proton donor in catalysis. Residues aspartate 245, glutamate 289, and aspartate 316 each contribute to the Mg(2+) site. The (2R)-2-phosphoglycerate site is built by lysine 341, arginine 370, serine 371, and lysine 392. Lysine 341 (proton acceptor) is an active-site residue.

Belongs to the enolase family. Mg(2+) serves as cofactor.

Its subcellular location is the cytoplasm. It localises to the secreted. It is found in the cell surface. The catalysed reaction is (2R)-2-phosphoglycerate = phosphoenolpyruvate + H2O. The protein operates within carbohydrate degradation; glycolysis; pyruvate from D-glyceraldehyde 3-phosphate: step 4/5. Functionally, catalyzes the reversible conversion of 2-phosphoglycerate (2-PG) into phosphoenolpyruvate (PEP). It is essential for the degradation of carbohydrates via glycolysis. This is Enolase from Ruminiclostridium cellulolyticum (strain ATCC 35319 / DSM 5812 / JCM 6584 / H10) (Clostridium cellulolyticum).